A 212-amino-acid polypeptide reads, in one-letter code: Glycerol-3-phosphate acyltransferase (212 aa).

The next 5 membrane-spanning stretches (helical) occupy residues 3-23 (ILLAALVAYLIGSVSFAVIVS), 51-71 (KAAILTLVGDAFKGWLAVWLA), 78-98 (DVAVAWVAIAVFVGHLYPVFF), 115-135 (AVHPVLGLATALTWLIVAFFF), and 139-159 (SLAALVAAVFAPVFDVFLFGT).

The protein belongs to the PlsY family. In terms of assembly, probably interacts with PlsX.

Its subcellular location is the cell inner membrane. The enzyme catalyses an acyl phosphate + sn-glycerol 3-phosphate = a 1-acyl-sn-glycero-3-phosphate + phosphate. It functions in the pathway lipid metabolism; phospholipid metabolism. Functionally, catalyzes the transfer of an acyl group from acyl-phosphate (acyl-PO(4)) to glycerol-3-phosphate (G3P) to form lysophosphatidic acid (LPA). This enzyme utilizes acyl-phosphate as fatty acyl donor, but not acyl-CoA or acyl-ACP. This Burkholderia vietnamiensis (strain G4 / LMG 22486) (Burkholderia cepacia (strain R1808)) protein is Glycerol-3-phosphate acyltransferase.